Consider the following 404-residue polypeptide: Methionine aminopeptidase 1D, mitochondrial (404 aa).

A mitochondrion-targeting transit peptide spans 1 to 58 (MNKILKNIINKSSINNVFKTSFNGGISSSSSSSSSYLNNNNNIIKSYNVQQKQQQRYY). A disordered region spans residues 86–109 (VRSQRLTKKTASPLEGMNRKERRK). Position 232 (H232) interacts with substrate. A divalent metal cation is bound by residues D249, D260, and H323. H330 serves as a coordination point for substrate. A divalent metal cation contacts are provided by E355 and E389.

The protein belongs to the peptidase M24A family. Methionine aminopeptidase type 1 subfamily. Co(2+) serves as cofactor. It depends on Zn(2+) as a cofactor. The cofactor is Mn(2+). Fe(2+) is required as a cofactor.

It is found in the mitochondrion. The catalysed reaction is Release of N-terminal amino acids, preferentially methionine, from peptides and arylamides.. Removes the N-terminal methionine from nascent proteins. The N-terminal methionine is often cleaved when the second residue in the primary sequence is small and uncharged (Met-Ala-, Cys, Gly, Pro, Ser, Thr, or Val). The protein is Methionine aminopeptidase 1D, mitochondrial (metap1d) of Dictyostelium discoideum (Social amoeba).